The following is a 642-amino-acid chain: Threonine--tRNA ligase (642 aa).

Residues 1–61 form the TGS domain; that stretch reads MPVITLPDGS…ENDAQLSIIT (61 aa). The segment at 243–534 is catalytic; that stretch reads DHRKIGKQLD…LTEEFAGFFP (292 aa). K286 bears the N6-acetyllysine mark. Zn(2+)-binding residues include C334, H385, and H511.

The protein belongs to the class-II aminoacyl-tRNA synthetase family. In terms of assembly, homodimer. Requires Zn(2+) as cofactor.

It is found in the cytoplasm. The catalysed reaction is tRNA(Thr) + L-threonine + ATP = L-threonyl-tRNA(Thr) + AMP + diphosphate + H(+). Catalyzes the attachment of threonine to tRNA(Thr) in a two-step reaction: L-threonine is first activated by ATP to form Thr-AMP and then transferred to the acceptor end of tRNA(Thr). Also edits incorrectly charged L-seryl-tRNA(Thr). The sequence is that of Threonine--tRNA ligase from Escherichia coli O8 (strain IAI1).